Reading from the N-terminus, the 657-residue chain is Conserved oligomeric Golgi complex subunit 6 (657 aa).

This sequence belongs to the COG6 family. In terms of assembly, component of the conserved oligomeric Golgi complex which is composed of eight different subunits and is required for normal Golgi morphology and localization.

The protein localises to the golgi apparatus membrane. Required for normal Golgi function. The polypeptide is Conserved oligomeric Golgi complex subunit 6 (COG6) (Homo sapiens (Human)).